The primary structure comprises 208 residues: Small ribosomal subunit protein uS3 (208 aa).

Residues 16–85 (VDEYLKNKLP…KPQIEVKQIE (70 aa)) form the KH type-2 domain.

This sequence belongs to the universal ribosomal protein uS3 family. In terms of assembly, part of the 30S ribosomal subunit.

Functionally, binds the lower part of the 30S subunit head. The chain is Small ribosomal subunit protein uS3 from Methanococcus aeolicus (strain ATCC BAA-1280 / DSM 17508 / OCM 812 / Nankai-3).